The chain runs to 241 residues: DnaA regulatory inactivator Hda (241 aa).

The protein belongs to the DnaA family. HdA subfamily. In terms of assembly, the active form seems to be an ADP-bound monomer. Forms the RIDA complex (regulatory inactivation of DnaA) of ATP-DnaA, ADP-Hda and the DNA-loaded beta sliding clamp (dnaN).

Its function is as follows. Mediates the interaction of DNA replication initiator protein DnaA with DNA polymerase subunit beta sliding clamp (dnaN). Stimulates hydrolysis of ATP-DnaA to ADP-DnaA, rendering DnaA inactive for reinitiation, a process called regulatory inhibition of DnaA or RIDA. The sequence is that of DnaA regulatory inactivator Hda from Salmonella paratyphi A (strain ATCC 9150 / SARB42).